Consider the following 431-residue polypeptide: U-box domain-containing protein 20 (431 aa).

The region spanning Thr32–Gly106 is the U-box domain.

It carries out the reaction S-ubiquitinyl-[E2 ubiquitin-conjugating enzyme]-L-cysteine + [acceptor protein]-L-lysine = [E2 ubiquitin-conjugating enzyme]-L-cysteine + N(6)-ubiquitinyl-[acceptor protein]-L-lysine.. It functions in the pathway protein modification; protein ubiquitination. Functionally, functions as an E3 ubiquitin ligase. In Arabidopsis thaliana (Mouse-ear cress), this protein is U-box domain-containing protein 20 (PUB20).